The chain runs to 287 residues: mRNA-capping enzyme small subunit (287 aa).

Heterodimer of a large and a small subunit.

It localises to the virion. It carries out the reaction a 5'-end (5'-triphosphoguanosine)-ribonucleoside in mRNA + S-adenosyl-L-methionine = a 5'-end (N(7)-methyl 5'-triphosphoguanosine)-ribonucleoside in mRNA + S-adenosyl-L-homocysteine. Catalyzes the last reaction in the mRNA cap formation pathway. The protein is mRNA-capping enzyme small subunit of Sus scrofa (Pig).